The chain runs to 458 residues: tRNA modification GTPase MnmE (458 aa).

(6S)-5-formyl-5,6,7,8-tetrahydrofolate contacts are provided by Arg-26, Glu-88, and Arg-127. Positions 224–378 (GLSTAIIGRP…IEDRINQLFF (155 aa)) constitute a TrmE-type G domain. K(+) is bound at residue Asn-234. Residues 234-239 (NVGKSS), 253-259 (TDIAGTT), and 278-281 (DTAG) contribute to the GTP site. Ser-238 is a binding site for Mg(2+). 3 residues coordinate K(+): Thr-253, Ile-255, and Thr-258. Position 259 (Thr-259) interacts with Mg(2+). Lys-458 contributes to the (6S)-5-formyl-5,6,7,8-tetrahydrofolate binding site.

It belongs to the TRAFAC class TrmE-Era-EngA-EngB-Septin-like GTPase superfamily. TrmE GTPase family. As to quaternary structure, homodimer. Heterotetramer of two MnmE and two MnmG subunits. K(+) serves as cofactor.

It is found in the cytoplasm. Exhibits a very high intrinsic GTPase hydrolysis rate. Involved in the addition of a carboxymethylaminomethyl (cmnm) group at the wobble position (U34) of certain tRNAs, forming tRNA-cmnm(5)s(2)U34. This is tRNA modification GTPase MnmE from Streptococcus pyogenes serotype M4 (strain MGAS10750).